The primary structure comprises 117 residues: uncharacterized protein (117 aa).

Residues 1 to 18 (MKFFWVSSLLGLLGLSTA) form the signal peptide. N-linked (GlcNAc...) asparagine glycosylation occurs at Asn-86.

This is an uncharacterized protein from Schizosaccharomyces pombe (strain 972 / ATCC 24843) (Fission yeast).